The primary structure comprises 342 residues: N-alpha-acetyl-L-2,4-diaminobutyric acid deacetylase (342 aa).

Positions 103–124 (TAGRRTSPMDGGNLNRSFPGDP) are disordered.

Belongs to the DoeB deacetylase family. It depends on Zn(2+) as a cofactor.

It localises to the cytoplasm. The enzyme catalyses (2S)-2-acetamido-4-aminobutanoate + H2O = L-2,4-diaminobutanoate + acetate. Functionally, involved in the degradation of ectoine, which allows H.elongata to utilize ectoine as both a carbon and a nitrogen source for growth. Catalyzes the deacetylation of N-alpha-acetyl-L-2,4-diaminobutyrate (N-alpha-Ac-DABA) to yield L-2,4-diaminobutyrate (DABA). This is N-alpha-acetyl-L-2,4-diaminobutyric acid deacetylase from Halomonas elongata (strain ATCC 33173 / DSM 2581 / NBRC 15536 / NCIMB 2198 / 1H9).